Consider the following 259-residue polypeptide: DNA-directed RNA polymerase 30 kDa polypeptide (259 aa).

The TFIIS-type zinc-finger motif lies at 155 to 195; the sequence is YNTPCPNCKSRNTTPMMIQTRAADEPPLVRHACRDCKQHFK. Residues Cys159, Cys162, Cys187, and Cys190 each coordinate Zn(2+). The interval 220-259 is disordered; that stretch reads EILPDNNPSPPESPEPASPIDDGLIRATFDRNDEPPEDDE. The span at 226 to 236 shows a compositional bias: pro residues; the sequence is NPSPPESPEPA.

This sequence belongs to the poxviridae DNA-directed RNA polymerase 30 kDa subunit family. The DNA-dependent RNA polymerase (vRNAP) consists of eight subunits encoded by early viral genes and termed according to their apparent molecular masses Rpo147, Rpo132, Rpo35, Rpo30, Rpo22, Rpo19, Rpo18, and Rpo7. The same holoenzyme, with the addition of the transcription-specificity factor RAP94, is used for early gene expression.

It localises to the virion. The protein resides in the host cytoplasm. It carries out the reaction RNA(n) + a ribonucleoside 5'-triphosphate = RNA(n+1) + diphosphate. Part of the DNA-dependent RNA polymerase which catalyzes the transcription of viral DNA into RNA using the four ribonucleoside triphosphates as substrates. Responsible for the transcription of early, intermediate and late genes. DNA-dependent RNA polymerase associates with the early transcription factor (ETF), itself composed of OPG118 and OPG134, thereby allowing the early genes transcription. Late transcription, and probably also intermediate transcription, require newly synthesized RNA polymerase. This is DNA-directed RNA polymerase 30 kDa polypeptide (OPG066) from Homo sapiens (Human).